A 99-amino-acid chain; its full sequence is Phosphoribosyl-ATP pyrophosphatase (99 aa).

This sequence belongs to the PRA-PH family.

It is found in the cytoplasm. It carries out the reaction 1-(5-phospho-beta-D-ribosyl)-ATP + H2O = 1-(5-phospho-beta-D-ribosyl)-5'-AMP + diphosphate + H(+). It functions in the pathway amino-acid biosynthesis; L-histidine biosynthesis; L-histidine from 5-phospho-alpha-D-ribose 1-diphosphate: step 2/9. This is Phosphoribosyl-ATP pyrophosphatase from Methanococcoides burtonii (strain DSM 6242 / NBRC 107633 / OCM 468 / ACE-M).